Here is a 389-residue protein sequence, read N- to C-terminus: Acetylornithine aminotransferase (389 aa).

Pyridoxal 5'-phosphate is bound by residues 104 to 105 (GT) and phenylalanine 131. Arginine 134 provides a ligand contact to N(2)-acetyl-L-ornithine. 216-219 (DEVQ) contributes to the pyridoxal 5'-phosphate binding site. Lysine 245 carries the N6-(pyridoxal phosphate)lysine modification. Serine 273 serves as a coordination point for N(2)-acetyl-L-ornithine. Threonine 274 contributes to the pyridoxal 5'-phosphate binding site.

It belongs to the class-III pyridoxal-phosphate-dependent aminotransferase family. ArgD subfamily. Homodimer. Pyridoxal 5'-phosphate serves as cofactor.

The protein resides in the cytoplasm. It catalyses the reaction N(2)-acetyl-L-ornithine + 2-oxoglutarate = N-acetyl-L-glutamate 5-semialdehyde + L-glutamate. It participates in amino-acid biosynthesis; L-arginine biosynthesis; N(2)-acetyl-L-ornithine from L-glutamate: step 4/4. The polypeptide is Acetylornithine aminotransferase (Methanopyrus kandleri (strain AV19 / DSM 6324 / JCM 9639 / NBRC 100938)).